The following is a 283-amino-acid chain: Pantothenate synthetase (283 aa).

30–37 (MGALHRGH) serves as a coordination point for ATP. His-37 functions as the Proton donor in the catalytic mechanism. Gln-61 is a (R)-pantoate binding site. Gln-61 is a binding site for beta-alanine. 147–150 (GQKD) contributes to the ATP binding site. Gln-153 is a binding site for (R)-pantoate. ATP-binding positions include Ile-176 and 184–187 (MSSR).

The protein belongs to the pantothenate synthetase family. Homodimer.

Its subcellular location is the cytoplasm. The catalysed reaction is (R)-pantoate + beta-alanine + ATP = (R)-pantothenate + AMP + diphosphate + H(+). Its pathway is cofactor biosynthesis; (R)-pantothenate biosynthesis; (R)-pantothenate from (R)-pantoate and beta-alanine: step 1/1. Catalyzes the condensation of pantoate with beta-alanine in an ATP-dependent reaction via a pantoyl-adenylate intermediate. This Cytophaga hutchinsonii (strain ATCC 33406 / DSM 1761 / CIP 103989 / NBRC 15051 / NCIMB 9469 / D465) protein is Pantothenate synthetase.